Consider the following 491-residue polypeptide: UDP-glycosyltransferase 73C1 (491 aa).

UDP-alpha-D-glucose is bound by residues Ser292, 352-354 (SPQ), 369-377 (HCGWNSTLE), and 391-394 (FGDQ).

Belongs to the UDP-glycosyltransferase family.

In terms of biological role, involved in the O-glucosylation of trans-zeatin and dihydrozeatin. Also active in vitro on cis-zeatin, dihydrozeatin-9-N-Glc, and olomoucine. Can detoxify the explosive 2,4,6-trinitrotoluene in plant by forming O- or C-glucose conjugates. The chain is UDP-glycosyltransferase 73C1 (UGT73C1) from Arabidopsis thaliana (Mouse-ear cress).